A 101-amino-acid chain; its full sequence is Small ribosomal subunit protein uS14 (101 aa).

Belongs to the universal ribosomal protein uS14 family. Part of the 30S ribosomal subunit. Contacts proteins S3 and S10.

In terms of biological role, binds 16S rRNA, required for the assembly of 30S particles and may also be responsible for determining the conformation of the 16S rRNA at the A site. In Aliivibrio salmonicida (strain LFI1238) (Vibrio salmonicida (strain LFI1238)), this protein is Small ribosomal subunit protein uS14.